Here is a 225-residue protein sequence, read N- to C-terminus: 3-dehydroquinate dehydratase (225 aa).

Residues serine 6, 30-32, and arginine 62 each bind 3-dehydroquinate; that span reads EWR. Residue histidine 118 is the Proton donor/acceptor of the active site. Lysine 143 serves as the catalytic Schiff-base intermediate with substrate. 3 residues coordinate 3-dehydroquinate: arginine 186, serine 205, and glutamine 209.

It belongs to the type-I 3-dehydroquinase family. In terms of assembly, homodimer.

It catalyses the reaction 3-dehydroquinate = 3-dehydroshikimate + H2O. Its pathway is metabolic intermediate biosynthesis; chorismate biosynthesis; chorismate from D-erythrose 4-phosphate and phosphoenolpyruvate: step 3/7. In terms of biological role, involved in the third step of the chorismate pathway, which leads to the biosynthesis of aromatic amino acids. Catalyzes the cis-dehydration of 3-dehydroquinate (DHQ) and introduces the first double bond of the aromatic ring to yield 3-dehydroshikimate. The polypeptide is 3-dehydroquinate dehydratase (Streptococcus pneumoniae (strain Hungary19A-6)).